The sequence spans 508 residues: Steroid 17-alpha-hydroxylase/17,20 lyase (508 aa).

Asn-202 is a binding site for substrate. A heme-binding site is contributed by Cys-442.

Belongs to the cytochrome P450 family. Heme serves as cofactor.

The protein resides in the endoplasmic reticulum membrane. It is found in the microsome membrane. It catalyses the reaction a C21-steroid + reduced [NADPH--hemoprotein reductase] + O2 = a 17alpha-hydroxy-C21-steroid + oxidized [NADPH--hemoprotein reductase] + H2O + H(+). It carries out the reaction progesterone + reduced [NADPH--hemoprotein reductase] + O2 = 17alpha-hydroxyprogesterone + oxidized [NADPH--hemoprotein reductase] + H2O + H(+). The enzyme catalyses pregnenolone + reduced [NADPH--hemoprotein reductase] + O2 = 17alpha-hydroxypregnenolone + oxidized [NADPH--hemoprotein reductase] + H2O + H(+). The catalysed reaction is 17alpha-hydroxyprogesterone + reduced [NADPH--hemoprotein reductase] + O2 = androst-4-ene-3,17-dione + acetate + oxidized [NADPH--hemoprotein reductase] + H2O + 2 H(+). It catalyses the reaction 17alpha-hydroxyprogesterone + reduced [NADPH--hemoprotein reductase] + O2 = 16alpha,17alpha-dihydroxyprogesterone + oxidized [NADPH--hemoprotein reductase] + H2O + H(+). It carries out the reaction 16alpha,17alpha-dihydroxyprogesterone + reduced [NADPH--hemoprotein reductase] + O2 = 6beta,16alpha,17alpha-trihydroxyprogesterone + oxidized [NADPH--hemoprotein reductase] + H2O + H(+). The enzyme catalyses 17alpha-hydroxypregnenolone + reduced [NADPH--hemoprotein reductase] + O2 = 3beta-hydroxyandrost-5-en-17-one + acetate + oxidized [NADPH--hemoprotein reductase] + H2O + 2 H(+). The catalysed reaction is 16alpha,17alpha-dihydroxypregnenolone + reduced [NADPH--hemoprotein reductase] + O2 = 3beta,16alpha-dihydroxy-androst-5-en-17-one + acetate + oxidized [NADPH--hemoprotein reductase] + H2O + 2 H(+). It catalyses the reaction 3beta-hydroxyandrost-5-en-17-one + reduced [NADPH--hemoprotein reductase] + O2 = 3beta,16alpha-dihydroxy-androst-5-en-17-one + oxidized [NADPH--hemoprotein reductase] + H2O + H(+). It carries out the reaction androst-4-ene-3,17-dione + reduced [NADPH--hemoprotein reductase] + O2 = 16alpha-hydroxyandrost-4-ene-3,17-dione + oxidized [NADPH--hemoprotein reductase] + H2O + H(+). Its pathway is steroid hormone biosynthesis. It functions in the pathway steroid biosynthesis; glucocorticoid biosynthesis. With respect to regulation, regulated predominantly by intracellular cAMP levels. The 17,20-lyase activity is stimulated by cytochrome b5, which acts as an allosteric effector increasing the Vmax of the lyase activity. In terms of biological role, a cytochrome P450 monooxygenase involved in corticoid and androgen biosynthesis. Catalyzes 17-alpha hydroxylation of C21 steroids, which is common for both pathways. A second oxidative step, required only for androgen synthesis, involves an acyl-carbon cleavage. The 17-alpha hydroxy intermediates, as part of adrenal glucocorticoids biosynthesis pathway, are precursors of cortisol. Hydroxylates steroid hormones, pregnenolone and progesterone to form 17-alpha hydroxy metabolites, followed by the cleavage of the C17-C20 bond to form C19 steroids, dehydroepiandrosterone (DHEA) and androstenedione. Has 16-alpha hydroxylase activity. Catalyzes 16-alpha hydroxylation of 17-alpha hydroxy pregnenolone, followed by the cleavage of the C17-C20 bond to form 16-alpha-hydroxy DHEA. Also 16-alpha hydroxylates androgens, relevant for estriol synthesis. Mechanistically, uses molecular oxygen inserting one oxygen atom into a substrate, and reducing the second into a water molecule, with two electrons provided by NADPH via cytochrome P450 reductase (CPR; NADPH-ferrihemoprotein reductase). The protein is Steroid 17-alpha-hydroxylase/17,20 lyase (CYP17A1) of Pan troglodytes (Chimpanzee).